Reading from the N-terminus, the 370-residue chain is Tomoregulin-1 (370 aa).

The N-terminal stretch at 1–36 is a signal peptide; that stretch reads MDGLHPASWMLLLGSLAFWSASSLLLFSLALPGARA. The Extracellular portion of the chain corresponds to 37 to 320; it reads SNQLLSECHN…VPSRQKLTHV (284 aa). Residue Asn-53 is glycosylated (N-linked (GlcNAc...) asparagine). Kazal-like domains follow at residues 88–135 and 179–227; these read ICQF…PCFS and VCNI…SCIE. Cystine bridges form between Cys-89–Cys-119, Cys-93–Cys-112, Cys-101–Cys-133, Cys-180–Cys-211, Cys-184–Cys-204, Cys-193–Cys-225, Cys-265–Cys-278, Cys-273–Cys-289, and Cys-291–Cys-300. One can recognise an EGF-like domain in the interval 261 to 301; sequence NYIPCSENYNGYCVHGKCELSYSSQKASCRCDSGYTGQYCD. A helical transmembrane segment spans residues 321–341; sequence LIAAIIGAVQIAIIVAIVMCI. Residues 342-370 lie on the Cytoplasmic side of the membrane; sequence TRKCPKNNRGRRQKQNLGHFSSDTSSRMV. Residues 349 to 370 form a disordered region; it reads NRGRRQKQNLGHFSSDTSSRMV. A compositionally biased stretch (polar residues) spans 356-370; sequence QNLGHFSSDTSSRMV.

Belongs to the tomoregulin family. In terms of assembly, interacts with cripto. Expressed at highest levels in brain, and at lower levels in neuroendocrine tissues. Present in neurons from the diencephalon (at protein level).

Its subcellular location is the cell membrane. Functionally, inhibits nodal/nr-1 and bmp signaling during neural patterning through interaction with cripto. This Xenopus laevis (African clawed frog) protein is Tomoregulin-1 (tmeff1).